The chain runs to 120 residues: MFLLYEYDLFWVFLIISSLIPILAFLISGVLAPISEGPEKLSSYESGIEPMGDAWLQFRIRYYIFALVFVVFDVETVFLYPWAMSFDVLGVSVFIEALVFVLILIVGSVYAWRKGALEWS.

The next 3 helical transmembrane spans lie at 10-30 (FWVF…ISGV), 64-84 (IFAL…PWAM), and 88-108 (VLGV…IVGS).

Belongs to the complex I subunit 3 family. NDH is composed of at least 16 different subunits, 5 of which are encoded in the nucleus.

The protein localises to the plastid. It localises to the chloroplast thylakoid membrane. The catalysed reaction is a plastoquinone + NADH + (n+1) H(+)(in) = a plastoquinol + NAD(+) + n H(+)(out). It catalyses the reaction a plastoquinone + NADPH + (n+1) H(+)(in) = a plastoquinol + NADP(+) + n H(+)(out). Functionally, NDH shuttles electrons from NAD(P)H:plastoquinone, via FMN and iron-sulfur (Fe-S) centers, to quinones in the photosynthetic chain and possibly in a chloroplast respiratory chain. The immediate electron acceptor for the enzyme in this species is believed to be plastoquinone. Couples the redox reaction to proton translocation, and thus conserves the redox energy in a proton gradient. In Pelargonium hortorum (Common geranium), this protein is NAD(P)H-quinone oxidoreductase subunit 3, chloroplastic.